The sequence spans 431 residues: Serine--tRNA ligase (431 aa).

T237 to E239 serves as a coordination point for L-serine. R268–E270 contacts ATP. Residue E291 coordinates L-serine. E355–S358 is a binding site for ATP. S390 is a binding site for L-serine.

Belongs to the class-II aminoacyl-tRNA synthetase family. Type-1 seryl-tRNA synthetase subfamily. Homodimer. The tRNA molecule binds across the dimer.

The protein localises to the cytoplasm. It catalyses the reaction tRNA(Ser) + L-serine + ATP = L-seryl-tRNA(Ser) + AMP + diphosphate + H(+). The enzyme catalyses tRNA(Sec) + L-serine + ATP = L-seryl-tRNA(Sec) + AMP + diphosphate + H(+). The protein operates within aminoacyl-tRNA biosynthesis; selenocysteinyl-tRNA(Sec) biosynthesis; L-seryl-tRNA(Sec) from L-serine and tRNA(Sec): step 1/1. Functionally, catalyzes the attachment of serine to tRNA(Ser). Is also able to aminoacylate tRNA(Sec) with serine, to form the misacylated tRNA L-seryl-tRNA(Sec), which will be further converted into selenocysteinyl-tRNA(Sec). The sequence is that of Serine--tRNA ligase from Neisseria gonorrhoeae (strain NCCP11945).